A 172-amino-acid polypeptide reads, in one-letter code: Adenine phosphoribosyltransferase (172 aa).

Belongs to the purine/pyrimidine phosphoribosyltransferase family. Homodimer.

The protein localises to the cytoplasm. The enzyme catalyses AMP + diphosphate = 5-phospho-alpha-D-ribose 1-diphosphate + adenine. Its pathway is purine metabolism; AMP biosynthesis via salvage pathway; AMP from adenine: step 1/1. Catalyzes a salvage reaction resulting in the formation of AMP, that is energically less costly than de novo synthesis. This is Adenine phosphoribosyltransferase from Ligilactobacillus salivarius (strain UCC118) (Lactobacillus salivarius).